The following is a 416-amino-acid chain: Calreticulin (416 aa).

The signal sequence occupies residues 1 to 17; that stretch reads MLLSVPLLLGLLGLAAA. An N-domain region spans residues 18-197; that stretch reads DPAIYFKEQF…NSQVESGSLE (180 aa). Residue Gln-26 participates in Ca(2+) binding. Position 48 is an N6-acetyllysine (Lys-48). 2 residues coordinate Ca(2+): Lys-62 and Lys-64. At Lys-64 the chain carries N6-(2-hydroxyisobutyryl)lysine. Residues Cys-105 and Cys-137 are joined by a disulfide bond. The an alpha-D-glucoside site is built by Tyr-109, Lys-111, Tyr-128, and Asp-135. Position 159 is an N6-acetyllysine (Lys-159). One copy of the 1-1 repeat lies at 191–202; sequence VESGSLEDDWDF. Residues 191–255 are 4 X approximate repeats; the sequence is VESGSLEDDW…DAKKPEDWDE (65 aa). Residues 193 to 277 are disordered; the sequence is SGSLEDDWDF…NPEYKGEWKP (85 aa). Residues 198-308 form a P-domain region; sequence DDWDFLPPKK…YSPDANIYAY (111 aa). The span at 207–251 shows a compositional bias: basic and acidic residues; the sequence is KIKDPDAAKPEDWDERAKIDDPTDSKPEDWDKPEHIPDPDAKKPE. An N6-acetyllysine modification is found at Lys-209. 6 repeat units span residues 210–221, 227–238, 244–255, 259–269, 273–283, and 287–297. The segment at 237–270 is interaction with PPIB; sequence DKPEHIPDPDAKKPEDWDEEMDGEWEPPVIQNPE. The segment covering 252-261 has biased composition (acidic residues); that stretch reads DWDEEMDGEW. The interval 259–297 is 3 X approximate repeats; that stretch reads GEWEPPVIQNPEYKGEWKPRQIDNPDYKGTWIHPEIDNP. The interval 309–416 is C-domain; sequence DSFAVLGLDL…ESPGQAKDEL (108 aa). Position 317 (Asp-317) interacts with an alpha-D-glucoside. Ca(2+) is bound at residue Asp-328. The interval 350-416 is disordered; that stretch reads TKAAEKQMKD…ESPGQAKDEL (67 aa). Positions 352 to 379 are enriched in basic and acidic residues; it reads AAEKQMKDKQDEEQRLKEEEEDKKRKEE. A compositionally biased stretch (acidic residues) spans 380–408; the sequence is EEAEDKEDDDDRDEDEDEEDEKEEDEEES. A Prevents secretion from ER motif is present at residues 413–416; the sequence is KDEL.

It belongs to the calreticulin family. Monomer. Interacts with GABARAP, NR3C1, PDIA3/ERp57 and TRIM21. Interacts (via P-domain) with PDIA5. Interacts with PPIB. Interacts with SPACA9. Component of an EIF2 complex at least composed of CELF1/CUGBP1, CALR, CALR3, EIF2S1, EIF2S2, HSP90B1 and HSPA5. Interacts with CLCC1.

The protein resides in the endoplasmic reticulum lumen. The protein localises to the cytoplasm. It localises to the cytosol. It is found in the cytolytic granule. Its subcellular location is the secreted. The protein resides in the extracellular space. The protein localises to the extracellular matrix. It localises to the cell surface. It is found in the sarcoplasmic reticulum lumen. Its subcellular location is the cytoplasmic vesicle. The protein resides in the secretory vesicle. The protein localises to the cortical granule. In terms of biological role, calcium-binding chaperone that promotes folding, oligomeric assembly and quality control in the endoplasmic reticulum (ER) via the calreticulin/calnexin cycle. This lectin interacts transiently with almost all of the monoglucosylated glycoproteins that are synthesized in the ER. Interacts with the DNA-binding domain of NR3C1 and mediates its nuclear export. Involved in maternal gene expression regulation. May participate in oocyte maturation via the regulation of calcium homeostasis. Present in the cortical granules of non-activated oocytes, is exocytosed during the cortical reaction in response to oocyte activation and might participate in the block to polyspermy. The chain is Calreticulin (Calr) from Mus musculus (Mouse).